A 318-amino-acid chain; its full sequence is Ribosomal RNA small subunit methyltransferase H (318 aa).

Residues 37-39, Asp-57, Phe-83, Asp-104, and Gln-111 contribute to the S-adenosyl-L-methionine site; that span reads GGH.

The protein belongs to the methyltransferase superfamily. RsmH family.

Its subcellular location is the cytoplasm. It carries out the reaction cytidine(1402) in 16S rRNA + S-adenosyl-L-methionine = N(4)-methylcytidine(1402) in 16S rRNA + S-adenosyl-L-homocysteine + H(+). Its function is as follows. Specifically methylates the N4 position of cytidine in position 1402 (C1402) of 16S rRNA. This Neisseria gonorrhoeae (strain NCCP11945) protein is Ribosomal RNA small subunit methyltransferase H.